The following is a 224-amino-acid chain: Putative carbamate hydrolase RutD (224 aa).

In terms of domain architecture, AB hydrolase-1 spans 14–115 (PVVVLISGLG…TVLVSVNGWL (102 aa)).

The protein belongs to the AB hydrolase superfamily. Hydrolase RutD family.

The enzyme catalyses carbamate + 2 H(+) = NH4(+) + CO2. Involved in pyrimidine catabolism. May facilitate the hydrolysis of carbamate, a reaction that can also occur spontaneously. This is Putative carbamate hydrolase RutD from Shigella dysenteriae serotype 1 (strain Sd197).